We begin with the raw amino-acid sequence, 447 residues long: Phosphoglucosamine mutase (447 aa).

Residue Ser-102 is the Phosphoserine intermediate of the active site. Mg(2+) is bound by residues Ser-102, Asp-241, Asp-243, and Asp-245. Phosphoserine is present on Ser-102.

This sequence belongs to the phosphohexose mutase family. Mg(2+) is required as a cofactor. In terms of processing, activated by phosphorylation.

It catalyses the reaction alpha-D-glucosamine 1-phosphate = D-glucosamine 6-phosphate. Its function is as follows. Catalyzes the conversion of glucosamine-6-phosphate to glucosamine-1-phosphate. This chain is Phosphoglucosamine mutase, found in Methylococcus capsulatus (strain ATCC 33009 / NCIMB 11132 / Bath).